A 558-amino-acid chain; its full sequence is NAD(P)H-quinone oxidoreductase chain 4 (558 aa).

14 consecutive transmembrane segments (helical) span residues 25–45 (FPWL…VPFI), 56–76 (WYAL…YLKG), 111–131 (LILL…PVSF), 133–153 (PKLF…VFAV), 157–177 (LLFF…LAIW), 189–209 (FIIY…AMGF), 230–250 (GFQL…LPVV), 264–284 (TAPV…YALL), 298–318 (FAPL…LTSF), 327–347 (IAYS…SFSS), 353–373 (AMLQ…LVGA), 395–417 (IMFA…SGFV), 438–458 (IVIA…LLSM), and 485–505 (IYVI…PRIM).

The protein belongs to the complex I subunit 4 family.

It localises to the cellular thylakoid membrane. The catalysed reaction is a plastoquinone + NADH + (n+1) H(+)(in) = a plastoquinol + NAD(+) + n H(+)(out). The enzyme catalyses a plastoquinone + NADPH + (n+1) H(+)(in) = a plastoquinol + NADP(+) + n H(+)(out). NDH-1 shuttles electrons from NAD(P)H, via FMN and iron-sulfur (Fe-S) centers, to quinones in the respiratory chain. The immediate electron acceptor for the enzyme in this species is believed to be plastoquinone. Couples the redox reaction to proton translocation (for every two electrons transferred, four hydrogen ions are translocated across the cytoplasmic membrane), and thus conserves the redox energy in a proton gradient. This chain is NAD(P)H-quinone oxidoreductase chain 4, found in Prochlorococcus marinus (strain MIT 9211).